We begin with the raw amino-acid sequence, 185 residues long: Ribosome hibernation promotion factor (185 aa).

Positions 1 to 125 are probably still associates with ribosome; sequence MIKFNIRGEN…PLDTTDEVAE (125 aa). The tract at residues 126 to 185 is required but not sufficient to restore ribosome dimerization, in vitro will replace E.coli RMF in ribosome dimerization; sequence DHVDIVRTKHVALKPMDAEEAVLQMDMLGHDFYVFTDADSNGTHVVYRRTDGRYGLIETE.

This sequence belongs to the HPF/YfiA ribosome-associated protein family. Long HPF subfamily. Interacts with 100S ribosomes in stationary phase; alters the relative position of the 30S and 50S subunits.

It localises to the cytoplasm. Required for dimerization of active 70S ribosomes into 100S ribosomes in stationary phase; 100S ribosomes are translationally inactive and sometimes present during exponential growth. Able to dimerize E.coli 70S ribosomes in vitro. This chain is Ribosome hibernation promotion factor, found in Lactococcus lactis subsp. cremoris (strain MG1363).